A 198-amino-acid chain; its full sequence is Ribonuclease HII 1 (198 aa).

The region spanning 7 to 196 is the RNase H type-2 domain; the sequence is ELTAGVDEAG…VRAALARAAA (190 aa). Residues aspartate 13, glutamate 14, and aspartate 105 each coordinate a divalent metal cation.

It belongs to the RNase HII family. The cofactor is Mn(2+). Mg(2+) serves as cofactor.

It localises to the cytoplasm. It carries out the reaction Endonucleolytic cleavage to 5'-phosphomonoester.. Endonuclease that specifically degrades the RNA of RNA-DNA hybrids. The sequence is that of Ribonuclease HII 1 from Methylibium petroleiphilum (strain ATCC BAA-1232 / LMG 22953 / PM1).